The primary structure comprises 139 residues: ATP synthase epsilon chain 2 (139 aa).

It belongs to the ATPase epsilon chain family. As to quaternary structure, F-type ATPases have 2 components, CF(1) - the catalytic core - and CF(0) - the membrane proton channel. CF(1) has five subunits: alpha(3), beta(3), gamma(1), delta(1), epsilon(1). CF(0) has three main subunits: a, b and c.

It is found in the cell inner membrane. In terms of biological role, produces ATP from ADP in the presence of a proton gradient across the membrane. This Ralstonia nicotianae (strain ATCC BAA-1114 / GMI1000) (Ralstonia solanacearum) protein is ATP synthase epsilon chain 2 (atpC2).